The chain runs to 340 residues: Guanine nucleotide-binding protein subunit beta-4 (340 aa).

S2 is subject to N-acetylserine. S2 carries the phosphoserine modification. WD repeat units lie at residues 53-92 (GHLA…KMHA), 95-134 (LRSS…GNVR), 141-179 (GHTG…QTTT), 182-221 (GHSG…CRQS), and 224-263 (GHIS…ELLL). H266 carries the post-translational modification Phosphohistidine. WD repeat units follow at residues 268–307 (NIIC…RAGV) and 310–339 (GHDN…LRIW).

This sequence belongs to the WD repeat G protein beta family. As to quaternary structure, g proteins are composed of 3 units, alpha, beta and gamma. As to expression, widely expressed in the brain. Highest levels found in the hippocampus and layers v and vi of the neocortex.

Functionally, guanine nucleotide-binding proteins (G proteins) are involved as a modulator or transducer in various transmembrane signaling systems. The beta and gamma chains are required for the GTPase activity, for replacement of GDP by GTP, and for G protein-effector interaction. This is Guanine nucleotide-binding protein subunit beta-4 (Gnb4) from Rattus norvegicus (Rat).